Here is a 222-residue protein sequence, read N- to C-terminus: Probable transaldolase (222 aa).

Catalysis depends on lysine 83, which acts as the Schiff-base intermediate with substrate.

The protein belongs to the transaldolase family. Type 3B subfamily.

It is found in the cytoplasm. It carries out the reaction D-sedoheptulose 7-phosphate + D-glyceraldehyde 3-phosphate = D-erythrose 4-phosphate + beta-D-fructose 6-phosphate. The protein operates within carbohydrate degradation; pentose phosphate pathway; D-glyceraldehyde 3-phosphate and beta-D-fructose 6-phosphate from D-ribose 5-phosphate and D-xylulose 5-phosphate (non-oxidative stage): step 2/3. Functionally, transaldolase is important for the balance of metabolites in the pentose-phosphate pathway. This is Probable transaldolase from Nitrosopumilus maritimus (strain SCM1).